Consider the following 202-residue polypeptide: dITP/XTP pyrophosphatase (202 aa).

7–12 (TTNEGK) serves as a coordination point for substrate. Mg(2+) is bound by residues E37 and D66. D66 (proton acceptor) is an active-site residue. Residues S67, 155 to 158 (FGYD), K178, and 183 to 184 (HR) contribute to the substrate site.

The protein belongs to the HAM1 NTPase family. Homodimer. It depends on Mg(2+) as a cofactor.

The catalysed reaction is XTP + H2O = XMP + diphosphate + H(+). It carries out the reaction dITP + H2O = dIMP + diphosphate + H(+). It catalyses the reaction ITP + H2O = IMP + diphosphate + H(+). In terms of biological role, pyrophosphatase that catalyzes the hydrolysis of nucleoside triphosphates to their monophosphate derivatives, with a high preference for the non-canonical purine nucleotides XTP (xanthosine triphosphate), dITP (deoxyinosine triphosphate) and ITP. Seems to function as a house-cleaning enzyme that removes non-canonical purine nucleotides from the nucleotide pool, thus preventing their incorporation into DNA/RNA and avoiding chromosomal lesions. The polypeptide is dITP/XTP pyrophosphatase (Aquifex aeolicus (strain VF5)).